Here is a 325-residue protein sequence, read N- to C-terminus: MLPTLTALLCLGLCLSQRINTEKQTLPKPIIWAKPSIMVTKGNSVNIWCQGAQSASEYQLYFEGSFFALERPKSSRSMNKVKFFISQMTSHTAGIYTCFYQSGELWSESSNPLKLVVTGLYDTPTLWVHPGPEVTLGENVTFSCHLKTATSKFFLLKERESNHIQHKYGNIQAEFPMGPVTRAHRGTYRCFGSYNDYAWSFPSEPVTLLITGEVENTSLAPTDPVSSLDYWEFDLSTKESGLQKDSAFWDHTAQNLIRIGLACIIVMALVWLLAEDWLSRRKDHEKLNRLTSWECRGRRRMHRYHEEEQRDAISMRELKATPGDM.

Residues 1 to 16 form the signal peptide; sequence MLPTLTALLCLGLCLS. Topologically, residues 17–258 are extracellular; the sequence is QRINTEKQTL…WDHTAQNLIR (242 aa). Ig-like domains lie at 42–100 and 137–192; these read GNSV…TCFY and GENV…RCFG. C49 and C98 are disulfide-bonded. A glycan (N-linked (GlcNAc...) asparagine) is linked at N139. C144 and C190 are disulfide-bonded. A glycan (N-linked (GlcNAc...) asparagine) is linked at N216. A helical transmembrane segment spans residues 259-279; that stretch reads IGLACIIVMALVWLLAEDWLS. Residues 280–325 are Cytoplasmic-facing; that stretch reads RRKDHEKLNRLTSWECRGRRRMHRYHEEEQRDAISMRELKATPGDM.

This sequence belongs to the natural cytotoxicity receptor (NCR) family. Interacts with CD3Z and FCER1G. Weakly expressed in spleen, heart and lung.

The protein localises to the cell membrane. Cytotoxicity-activating receptor that may contribute to the increased efficiency of activated natural killer (NK) cells to mediate tumor cell lysis. The chain is Natural cytotoxicity triggering receptor 1 (Ncr1) from Rattus norvegicus (Rat).